A 184-amino-acid polypeptide reads, in one-letter code: Ethylene-responsive transcription factor ERF024 (184 aa).

The interval 1 to 21 (MQGTSKDNGGRHPLYRGVRQR) is disordered. The AP2/ERF DNA-binding region spans 14-72 (LYRGVRQRKNSNKWVSEIREPRKPNRIWLGTFSTPEMAAIAYDVAALALKGSQAELNFP).

It belongs to the AP2/ERF transcription factor family. ERF subfamily.

The protein localises to the nucleus. Functionally, probably acts as a transcriptional activator. Binds to the GCC-box pathogenesis-related promoter element. May be involved in the regulation of gene expression by stress factors and by components of stress signal transduction pathways. This chain is Ethylene-responsive transcription factor ERF024 (ERF024), found in Arabidopsis thaliana (Mouse-ear cress).